A 753-amino-acid chain; its full sequence is 5-methyltetrahydropteroyltriglutamate--homocysteine methyltransferase (753 aa).

5-methyltetrahydropteroyltri-L-glutamate-binding positions include 17–20 (RELK) and K117. L-homocysteine is bound by residues 431-433 (IGS) and E484. Residues 431–433 (IGS) and E484 contribute to the L-methionine site. 5-methyltetrahydropteroyltri-L-glutamate is bound by residues 515–516 (RC) and W561. D599 provides a ligand contact to L-homocysteine. An L-methionine-binding site is contributed by D599. E605 is a binding site for 5-methyltetrahydropteroyltri-L-glutamate. Zn(2+)-binding residues include H641, C643, and E665. Residue H694 is the Proton donor of the active site. C726 contacts Zn(2+).

Belongs to the vitamin-B12 independent methionine synthase family. It depends on Zn(2+) as a cofactor.

The catalysed reaction is 5-methyltetrahydropteroyltri-L-glutamate + L-homocysteine = tetrahydropteroyltri-L-glutamate + L-methionine. It participates in amino-acid biosynthesis; L-methionine biosynthesis via de novo pathway; L-methionine from L-homocysteine (MetE route): step 1/1. Catalyzes the transfer of a methyl group from 5-methyltetrahydrofolate to homocysteine resulting in methionine formation. In Escherichia coli O139:H28 (strain E24377A / ETEC), this protein is 5-methyltetrahydropteroyltriglutamate--homocysteine methyltransferase.